Here is a 284-residue protein sequence, read N- to C-terminus: Nucleotide-binding protein Sbal_3671 (284 aa).

ATP is bound at residue Gly-8–Ser-15. A GTP-binding site is contributed by Asp-56 to Asn-59.

This sequence belongs to the RapZ-like family.

In terms of biological role, displays ATPase and GTPase activities. The protein is Nucleotide-binding protein Sbal_3671 of Shewanella baltica (strain OS155 / ATCC BAA-1091).